Reading from the N-terminus, the 171-residue chain is Adenine phosphoribosyltransferase (171 aa).

This sequence belongs to the purine/pyrimidine phosphoribosyltransferase family. As to quaternary structure, homodimer.

The protein localises to the cytoplasm. It catalyses the reaction AMP + diphosphate = 5-phospho-alpha-D-ribose 1-diphosphate + adenine. It functions in the pathway purine metabolism; AMP biosynthesis via salvage pathway; AMP from adenine: step 1/1. Functionally, catalyzes a salvage reaction resulting in the formation of AMP, that is energically less costly than de novo synthesis. This Mycoplasma mobile (strain ATCC 43663 / 163K / NCTC 11711) (Mesomycoplasma mobile) protein is Adenine phosphoribosyltransferase.